The sequence spans 486 residues: MRSGAERRGSSAAASPGSPPPGRARPAGSDAPSALPPPAAGQPRARDSGDVRSQPRPLFQWSKWKKRMGSSMSAATARRPVFDDKEDVNFDHFQILRAIGKGSFGKVCIVQKRDTEKMYAMKYMNKQQCIERDEVRNVFRELEILQEIEHVFLVNLWYSFQDEEDMFMVVDLLLGGDLRYHLQQNVQFSEDTVRLYICEMALALDYLRGQHIIHRDVKPDNILLDERGHAHLTDFNIATIIKDGERATALAGTKPYMAPEIFHSFVNGGTGYSFEVDWWSVGVMAYELLRGWRPYDIHSSNAVESLVQLFSTVSVQYVPTWSKEMVALLRKLLTVNPEHRLSSLQDVQAAPALAGVLWDHLSEKRVEPGFVPNKGRLHCDPTFELEEMILESRPLHKKKKRLAKNKSRDNSRDSSQSENDYLQDCLDAIQQDFVIFNREKLKRSQDLPREPLPAPESRDAAEPVEDEAERSALPMCGPICPSAGSG.

A disordered region spans residues 1 to 56 (MRSGAERRGSSAAASPGSPPPGRARPAGSDAPSALPPPAAGQPRARDSGDVRSQPR). 3 positions are modified to phosphoserine: S10, S15, and S18. Residues 24-33 (ARPAGSDAPS) are compositionally biased toward low complexity. The region spanning 93–353 (FQILRAIGKG…LQDVQAAPAL (261 aa)) is the Protein kinase domain. Residues 99–107 (IGKGSFGKV) and K122 each bind ATP. D216 serves as the catalytic Proton acceptor. Over residues 396–405 (HKKKKRLAKN) the composition is skewed to basic residues. Disordered regions lie at residues 396–419 (HKKK…QSEN) and 444–486 (SQDL…AGSG).

Belongs to the protein kinase superfamily. Ser/Thr protein kinase family. Mg(2+) is required as a cofactor.

It carries out the reaction L-seryl-[protein] + ATP = O-phospho-L-seryl-[protein] + ADP + H(+). The enzyme catalyses L-threonyl-[protein] + ATP = O-phospho-L-threonyl-[protein] + ADP + H(+). The sequence is that of Serine/threonine-protein kinase 32C from Homo sapiens (Human).